Consider the following 139-residue polypeptide: Small ribosomal subunit protein uS12 (139 aa).

Positions 1–44 (MPTINQLVKKPRTSKVKKSTAPALNKGYNSHKKKATDLASPQKR) are disordered. A compositionally biased stretch (basic residues) spans 9–18 (KKPRTSKVKK). Position 102 is a 3-methylthioaspartic acid (Asp102).

It belongs to the universal ribosomal protein uS12 family. As to quaternary structure, part of the 30S ribosomal subunit. Contacts proteins S8 and S17. May interact with IF1 in the 30S initiation complex.

Its function is as follows. With S4 and S5 plays an important role in translational accuracy. In terms of biological role, interacts with and stabilizes bases of the 16S rRNA that are involved in tRNA selection in the A site and with the mRNA backbone. Located at the interface of the 30S and 50S subunits, it traverses the body of the 30S subunit contacting proteins on the other side and probably holding the rRNA structure together. The combined cluster of proteins S8, S12 and S17 appears to hold together the shoulder and platform of the 30S subunit. The chain is Small ribosomal subunit protein uS12 from Macrococcus caseolyticus (strain JCSC5402) (Macrococcoides caseolyticum).